A 1712-amino-acid chain; its full sequence is Latent-transforming growth factor beta-binding protein 1 (1712 aa).

Residues 1 to 20 (MAGAWLRWGLLLWAGLLAWS) form the signal peptide. Residues 63–148 (SSTATSSRSL…QDTQSSGGSR (86 aa)) form a disordered region. The span at 136-147 (KVQQDTQSSGGS) shows a compositional bias: polar residues. An EGF-like 1 domain is found at 181–213 (TKPSCVPPCQNGGMCLRPQFCVCKPGTKGKACE). Cystine bridges form between C185–C195, C189–C201, and C203–C212. N-linked (GlcNAc...) asparagine glycans are attached at residues N339 and N370. Positions 391 to 423 (RVVICHLPCMNGGQCSSRDKCQCPPNFTGKLCQ) constitute an EGF-like 2 domain. 6 cysteine pairs are disulfide-bonded: C395–C405, C399–C411, C413–C422, C551–C573, C560–C586, and C574–C589. Residue N416 is glycosylated (N-linked (GlcNAc...) asparagine). One can recognise a TB 1 domain in the interval 549-601 (GRCFQETIGSQCGKALPGLSKQEDCCGTVGTSWGFNKCQKCPKKQSYHGYTQM). Residue N612 is glycosylated (N-linked (GlcNAc...) asparagine). The region spanning 618–658 (DINECQLQGVCPNGECLNTMGSYRCSCKMGFGPDPTFSSCV) is the EGF-like 3; calcium-binding domain. 7 cysteine pairs are disulfide-bonded: C622–C633, C628–C642, C644–C657, C671–C694, C681–C706, C695–C709, and C696–C721. Residue S639 is glycosylated (O-linked (Glc) serine). Residues 669-721 (GPCYRLVSPGRQCMHPLSVHLTKQICCCSVGKAWGPQCEKCPLPGTAAFKEIC) form the TB 2 domain. A disordered region spans residues 752 to 803 (KNTQPVAKSTHPPPLPAKEEPVEALTSSREHGPGVAEPEVVTAPPEKEIPSL). T761 and T793 each carry an O-linked (GalNAc...) threonine glycan. One can recognise an EGF-like 4; calcium-binding domain in the interval 865–906 (EINECTVNPDICGAGHCINLPVRYTCICYEGYKFSEQQRKCI). 37 cysteine pairs are disulfide-bonded: C869–C881, C876–C890, C892–C905, C911–C923, C918–C932, C934–C947, C953–C964, C959–C973, C976–C988, C994–C1005, C1000–C1014, C1017–C1028, C1034–C1045, C1040–C1054, C1056–C1069, C1075–C1086, C1081–C1095, C1097–C1110, C1116–C1127, C1122–C1136, C1138–C1151, C1157–C1169, C1164–C1178, C1180–C1192, C1198–C1210, C1204–C1219, C1221–C1234, C1240–C1252, C1246–C1261, C1263–C1276, C1282–C1294, C1289–C1303, C1305–C1319, C1340–C1363, C1350–C1375, C1364–C1380, and C1365–C1392. In terms of domain architecture, EGF-like 5; calcium-binding spans 907–948 (DIDECAQAQHLCSQGRCENTEGSFLCICPAGFIASEEGSNCI). O-linked (Glc) serine glycosylation occurs at S929. In terms of domain architecture, EGF-like 6; calcium-binding spans 949 to 989 (DVDECLRPDVCRDGRCINTAGAFRCEYCDSGYRMSRRGHCE). At N966 the chain carries (3R)-3-hydroxyasparagine. An EGF-like 7; calcium-binding domain is found at 990-1029 (DIDECLTPSTCPEEQCVNSPGSYQCVPCTEGFRGWNGQCL). O-linked (Glc) serine glycosylation occurs at S1011. The region spanning 1030 to 1070 (DVDECLQPKVCTNGSCTNLEGSYMCSCHKGYSPTPDHRHCQ) is the EGF-like 8; calcium-binding domain. N1042 is a glycosylation site (N-linked (GlcNAc...) asparagine). O-linked (Glc) serine glycosylation occurs at S1051. The EGF-like 9; calcium-binding domain occupies 1071 to 1111 (DIDECQQGNLCMNGQCKNTDGSFRCTCGQGYQLSAAKDQCE). The 41-residue stretch at 1112 to 1152 (DIDECEHRHLCSHGQCRNTEGSFQCLCNQGYRASVLGDHCE) folds into the EGF-like 10; calcium-binding domain. Residue N1129 is modified to (3R)-3-hydroxyasparagine. A glycan (O-linked (Glc) serine) is linked at S1133. Residues 1153–1193 (DINECLEDSSVCQGGDCINTAGSYDCTCPDGLQLNDNKGCQ) enclose the EGF-like 11; calcium-binding domain. The EGF-like 12; calcium-binding domain occupies 1194-1235 (DINECAQPGLCAPHGECLNTQGSFHCVCEQGFSISADGRTCE). S1216 carries an O-linked (Glc) serine glycan. Positions 1236-1277 (DIDECVNNTVCDSHGFCDNTAGSFRCLCYQGFQAPQDGQGCV) constitute an EGF-like 13; calcium-binding domain. Residue N1242 is glycosylated (N-linked (GlcNAc...) asparagine). The EGF-like 14; calcium-binding domain maps to 1278–1320 (DVNECELLSGVCGEAFCENVEGSFLCVCADENQEYSPMTGQCR). An 8-Cys3 region region spans residues 1335 to 1402 (EEKKECYYNL…PRGKGFVPAG (68 aa)). A TB 3 domain is found at 1338 to 1392 (KECYYNLNDASLCDNVLAPNVTKQECCCTSGAGWGDNCEIFPCPVQGTAEFSEMC). A glycan (N-linked (GlcNAc...) asparagine) is linked at N1357. Position 1405 is a phosphoserine (S1405). An EGF-like 15; calcium-binding domain is found at 1415–1457 (DADECLLFGEEICKNGYCLNTQPGYECYCKEGTYYDPVKLQCF). 10 disulfide bridges follow: C1419–C1432, C1427–C1441, C1443–C1456, C1462–C1473, C1468–C1482, C1484–C1497, C1517–C1541, C1527–C1553, C1542–C1556, and C1543–C1568. In terms of domain architecture, EGF-like 16; calcium-binding spans 1458-1498 (DMDECQDPNSCIDGQCVNTEGSYNCFCTHPMVLDASEKRCV). The O-linked (Glc) serine glycan is linked to S1479. The C-terminal domain stretch occupies residues 1498–1712 (VQPTESNEQI…LNLDKDSDLE (215 aa)). A TB 4 domain is found at 1515–1568 (DLCWEHLSEEYVCSRPLVGKQTTYTECCCLYGEAWGMQCALCPMKDSDDYAQLC). 2 positions are modified to phosphoserine: S1588 and S1607. The EGF-like 17 domain occupies 1612-1652 (QAEECGILNGCENGRCVRVQEGYTCDCFDGYHLDMAKMTCV). Cystine bridges form between C1616–C1627, C1622–C1636, C1638–C1651, C1657–C1672, C1667–C1681, and C1683–C1696. The EGF-like 18; calcium-binding domain maps to 1653–1697 (DVNECSELNNRMSLCKNAKCINTEGSYKCVCLPGYVPSDKPNYCT). Residue S1678 is glycosylated (O-linked (Glc) serine).

Belongs to the LTBP family. As to quaternary structure, interacts with TGFB1; associates via disulfide bonds with the Latency-associated peptide chain (LAP) regulatory chain of TGFB1, leading to regulate activation of TGF-beta-1. LTBP1 does not bind directly to TGF-beta-1, the active chain of TGFB1. Interacts (via C-terminal domain) with FBN1 (via N-terminal domain). Interacts with FBN2. Interacts with ADAMTSL2. Interacts with EFEMP2. In terms of processing, contains hydroxylated asparagine residues. Post-translationally, two intrachain disulfide bonds from the TB3 domain are rearranged upon TGFB1 binding, and form interchain bonds with TGFB1 propeptide, anchoring it to the extracellular matrix. O-glycosylated on serine residues by POGLUT2 and POGLUT3.

The protein localises to the secreted. It is found in the extracellular space. The protein resides in the extracellular matrix. In terms of biological role, key regulator of transforming growth factor beta (TGFB1, TGFB2 and TGFB3) that controls TGF-beta activation by maintaining it in a latent state during storage in extracellular space. Associates specifically via disulfide bonds with the Latency-associated peptide (LAP), which is the regulatory chain of TGF-beta, and regulates integrin-dependent activation of TGF-beta. Outcompeted by LRRC32/GARP for binding to LAP regulatory chain of TGF-beta. In Rattus norvegicus (Rat), this protein is Latent-transforming growth factor beta-binding protein 1 (Ltbp1).